The sequence spans 270 residues: Cell division protein DivIB (270 aa).

The Cytoplasmic segment spans residues 1–28 (MAENKRVISIENRIPELKKYRKKKLVRH). The chain crosses the membrane as a helical span at residues 29 to 49 (LAILIGIFVILIAITLYFLSP). Over 50-270 (LSKLDKIAVS…AAKEKKETNE (221 aa)) the chain is Extracellular. The 69-residue stretch at 51-119 (SKLDKIAVSG…NDVQINITEF (69 aa)) folds into the POTRA domain.

Belongs to the FtsQ/DivIB family. DivIB subfamily.

Its subcellular location is the cell membrane. Functionally, cell division protein that may be involved in stabilizing or promoting the assembly of the division complex. This is Cell division protein DivIB from Listeria monocytogenes serovar 1/2a (strain ATCC BAA-679 / EGD-e).